The chain runs to 272 residues: Ribosomal RNA small subunit methyltransferase A (272 aa).

S-adenosyl-L-methionine-binding residues include N27, L29, G54, E75, D97, and N117.

Belongs to the class I-like SAM-binding methyltransferase superfamily. rRNA adenine N(6)-methyltransferase family. RsmA subfamily.

It is found in the cytoplasm. It carries out the reaction adenosine(1518)/adenosine(1519) in 16S rRNA + 4 S-adenosyl-L-methionine = N(6)-dimethyladenosine(1518)/N(6)-dimethyladenosine(1519) in 16S rRNA + 4 S-adenosyl-L-homocysteine + 4 H(+). Specifically dimethylates two adjacent adenosines (A1518 and A1519) in the loop of a conserved hairpin near the 3'-end of 16S rRNA in the 30S particle. May play a critical role in biogenesis of 30S subunits. The protein is Ribosomal RNA small subunit methyltransferase A of Malacoplasma penetrans (strain HF-2) (Mycoplasma penetrans).